Consider the following 305-residue polypeptide: Glycine--tRNA ligase alpha subunit (305 aa).

This sequence belongs to the class-II aminoacyl-tRNA synthetase family. As to quaternary structure, tetramer of two alpha and two beta subunits.

Its subcellular location is the cytoplasm. It catalyses the reaction tRNA(Gly) + glycine + ATP = glycyl-tRNA(Gly) + AMP + diphosphate. This is Glycine--tRNA ligase alpha subunit from Streptococcus suis (strain 98HAH33).